The following is a 407-amino-acid chain: Histone acetyltransferase mst2 (407 aa).

The region spanning 98–372 (PQPTSIRYLY…VNPKLLRWTP (275 aa)) is the MYST-type HAT domain. The C2HC MYST-type zinc finger occupies 131–156 (LYICESCLKYMNSDHVLQRHKMKCSW). K198 carries the post-translational modification N6-acetyllysine; by autocatalysis. Acetyl-CoA is bound by residues 241 to 243 (ILT), T243, and 248 to 254 (QRRGYGV). E274 (proton donor/acceptor) is an active-site residue. 2 residues coordinate acetyl-CoA: S278 and S287.

The protein belongs to the MYST (SAS/MOZ) family. Component of the mst2 complex composed of at least eaf6, mst2, nto1, pdp3, ptf1, ptf2 and tfg3. Autoacetylation at Lys-198 is required for proper function.

It localises to the cytoplasm. The protein localises to the nucleus. It carries out the reaction L-lysyl-[protein] + acetyl-CoA = N(6)-acetyl-L-lysyl-[protein] + CoA + H(+). In terms of biological role, component of the mst2 complex which is a highly specific H3 lysine 14 (H3K14) acetyltransferase that functions together with gcn5 to regulate global levels of H3K14 acetylation (H3K14ac), critical for DNA damage checkpoint activation. Negatively regulates telomere silencing. Telomere silencing is increased due to histone hypoacetylation and/or an increase in the ratio of methylated histones to acetylated histones. Telomeric histone acetylation contributes to normal meiotic progression. This Schizosaccharomyces pombe (strain 972 / ATCC 24843) (Fission yeast) protein is Histone acetyltransferase mst2 (mst2).